We begin with the raw amino-acid sequence, 109 residues long: Tyrosine-protein phosphatase 16 (109 aa).

The 109-residue stretch at 1-109 (WRMVTEHTST…RIKTQKPIVV (109 aa)) folds into the Tyrosine-protein phosphatase domain. Asp-81 serves as a coordination point for substrate.

The protein belongs to the protein-tyrosine phosphatase family.

The enzyme catalyses O-phospho-L-tyrosyl-[protein] + H2O = L-tyrosyl-[protein] + phosphate. The protein is Tyrosine-protein phosphatase 16 (STY-16) of Styela plicata (Wrinkled sea squirt).